The chain runs to 507 residues: Probable Xaa-Pro aminopeptidase ARB_01886 (507 aa).

The Mn(2+) site is built by Asp275, Asp286, Glu434, and Glu478.

The protein belongs to the peptidase M24B family. Mn(2+) serves as cofactor.

It carries out the reaction Release of any N-terminal amino acid, including proline, that is linked to proline, even from a dipeptide or tripeptide.. Its function is as follows. Catalyzes the removal of a penultimate prolyl residue from the N-termini of peptides. This Arthroderma benhamiae (strain ATCC MYA-4681 / CBS 112371) (Trichophyton mentagrophytes) protein is Probable Xaa-Pro aminopeptidase ARB_01886.